A 195-amino-acid chain; its full sequence is Ribonuclease HII (195 aa).

The RNase H type-2 domain occupies 1–195; the sequence is MICGIDEAGR…SWRTLRYLNT (195 aa). Positions 6, 7, and 101 each coordinate a divalent metal cation.

This sequence belongs to the RNase HII family. Mn(2+) is required as a cofactor. The cofactor is Mg(2+).

Its subcellular location is the cytoplasm. The catalysed reaction is Endonucleolytic cleavage to 5'-phosphomonoester.. Its function is as follows. Endonuclease that specifically degrades the RNA of RNA-DNA hybrids. This Pyrobaculum islandicum (strain DSM 4184 / JCM 9189 / GEO3) protein is Ribonuclease HII.